The following is a 1189-amino-acid chain: Disabled homolog 2-interacting protein (1189 aa).

Positions 1–75 (MSAGGNARKS…EPSASTPFRV (75 aa)) are disordered. Over residues 20 to 38 (LLRRPRLQRQRSRSRSRTR) the composition is skewed to basic residues. Residues 39-49 (PARESPQERPG) show a composition bias toward basic and acidic residues. Residues 59-73 (SEKNPSMEPSASTPF) are compositionally biased toward polar residues. The PH domain maps to 101–202 (SFRHILPGFR…WMENLRRAVH (102 aa)). The C2 domain maps to 193–311 (WMENLRRAVH…AGRQFVEKWY (119 aa)). The Ras-GAP domain occupies 387–595 (GKVKDFLTDL…TNMQRFLLEI (209 aa)). The necessary for interaction with AKT1 stretch occupies residues 646 to 943 (LRDVHTALST…RTPPTLLSTL (298 aa)). A compositionally biased stretch (polar residues) spans 653-668 (LSTPGSGQLPGTNDLA). Disordered stretches follow at residues 653–679 (LSTP…SSVS) and 715–738 (RSSG…PDLQ). Positions 669-679 (STPGSGSSSVS) are enriched in low complexity. Residues 715–731 (RSSGVQPSPARSSSYSE) are compositionally biased toward polar residues. At serine 728 the chain carries Phosphoserine; by MAP3K5 and RIPK1. Serine 747 bears the Phosphoserine mark. Disordered regions lie at residues 804-823 (VPTP…PQLL), 843-865 (PRGL…NSEE), 895-998 (SLTE…SPNA), 1015-1034 (EDEG…SKEE), and 1163-1189 (ARNG…SSNC). A compositionally biased stretch (low complexity) spans 852–865 (EGHSSLSSHSNSEE). Pro residues predominate over residues 919–931 (QPPPPPPPPPPAP). Polar residues-rich tracts occupy residues 939-955 (LLST…TLAS) and 967-976 (LRQQSSSSKG). Phosphoserine is present on residues serine 978 and serine 995. The span at 1023 to 1034 (PPHRDRLRSKEE) shows a compositional bias: basic and acidic residues. Positions 1025-1159 (HRDRLRSKEE…SALTQLKERY (135 aa)) form a coiled coil.

As to quaternary structure, on plasma membrane, exists in an inactive form complexed with TNFR1; in response to TNF-alpha, dissociates from TNFR1 complex, translocates to cytoplasm and forms part of an intracellular signaling complex comprising TRADD, RIPK1, TRAF2 and MAP3K5. Interacts with DAB1. Part of a cytoplasmic complex made of HIPK1, DAB2IP and MAP3K5 in response to TNF-alpha; this complex formation promotes MAP3K5-JNK activation and subsequent apoptosis. Interacts (via N-terminal domain) with JAK2; the interaction occurs in a IFNG/IFN-gamma-dependent manner and inhibits JAK2 autophosphorylation activity. Interacts (via C2 domain) with GSK3B; the interaction stimulates GSK3B kinase activation. Interacts (via C2 domain) with PPP2CA. Interacts (via proline-rich motif) with a regulatory p85 subunit (via SH3 domain) of the PI3K complex; the interaction inhibits the PI3K-AKT complex activity in a TNF-alpha-dependent manner in prostate cancer (PCa) cells. Interacts with AKT1; the interaction is increased in a TNF-alpha-induced manner. Interacts (via C2 domain and active form preferentially) with KDR/VEGFR2 (tyrosine-phosphorylated active form preferentially); the interaction occurs at the late phase of VEGFA response and inhibits KDR/VEGFR2 activity. Interacts (via N-terminus C2 domain) with MAP3K5 ('Ser-966' dephosphorylated form preferentially); the interaction occurs in a TNF-alpha-induced manner. Interacts (via Ras-GAP domain) with the catalytic subunit of protein phosphatase PP2A; the interaction occurs in resting endothelial cells, is further enhanced by TNF-alpha stimulation and is required to bridge PP2A to MAP3K5. Interacts (via C-terminus PER domain) with TRAF2 (via zinc fingers); the interaction occurs in a TNF-alpha-dependent manner. Interacts with 14-3-3 proteins; the interaction occurs in a TNF-alpha-dependent manner. Interacts (via Ras-GAP domain) with RIPK1 (via kinase domain); the interaction occurs in a TNF-alpha-dependent manner. Interacts (via PH domain) with ERN1. Interacts with TRAF2. Interacts (via NPXY motif) with DAB2 (via PID domain). Interacts with RAB40C; acts as a GAP for RAB40C. In terms of processing, in response to TNF-alpha-induction, phosphorylated at Ser-728; phosphorylation leads to a conformational change, and thus, increases its association with 14-3-3 proteins, MAP3K5, RIPK1 and TRAF2 in endothelial cells; also stimulates regulatory p85 subunit sequestring and PI3K-p85 complex activity inhibition. Expressed in vascular endothelium of muscle and aorta, in smooth muscle cells of aorta and epithelial cells of lung. Expressed throughout the brain, including olfactory bulb, hypothalamus, cerebellum and cerebral cortex. Expressed in the soma and processes of neurons in a variety of brain structures, including the developing cerebral cortex, CA1 pyramidal neurons and Purkinje cells. Poorly expressed in medulloblastoma cells compared to cerebellar precursor proliferating progenitor cells (at protein level). Highly expressed in the brain, salivary gland, and testis; moderate expression in kidney and heart. Low expression in the lung, seminal vesicle, ventral prostate, epididymis, liver, and bladder. Very low expression in the coagulation gland and skeleton muscles. Lowest expression seen in spleen.

It localises to the cytoplasm. The protein localises to the cell membrane. The protein resides in the membrane. Its subcellular location is the cell projection. It is found in the dendrite. Functionally, functions as a scaffold protein implicated in the regulation of a large spectrum of both general and specialized signaling pathways. Involved in several processes such as innate immune response, inflammation and cell growth inhibition, apoptosis, cell survival, angiogenesis, cell migration and maturation. Also plays a role in cell cycle checkpoint control; reduces G1 phase cyclin levels resulting in G0/G1 cell cycle arrest. Mediates signal transduction by receptor-mediated inflammatory signals, such as the tumor necrosis factor (TNF), interferon (IFN) or lipopolysaccharide (LPS). Modulates the balance between phosphatidylinositol 3-kinase (PI3K)-AKT-mediated cell survival and apoptosis stimulated kinase (MAP3K5)-JNK signaling pathways; sequesters both AKT1 and MAP3K5 and counterbalances the activity of each kinase by modulating their phosphorylation status in response to pro-inflammatory stimuli. Acts as a regulator of the endoplasmic reticulum (ER) unfolded protein response (UPR) pathway; specifically involved in transduction of the ER stress-response to the JNK cascade through ERN1. Mediates TNF-alpha-induced apoptosis activation by facilitating dissociation of inhibitor 14-3-3 from MAP3K5; recruits the PP2A phosphatase complex which dephosphorylates MAP3K5 on 'Ser-966', leading to the dissociation of 13-3-3 proteins and activation of the MAP3K5-JNK signaling pathway in endothelial cells. Also mediates TNF/TRAF2-induced MAP3K5-JNK activation, while it inhibits CHUK-NF-kappa-B signaling. Acts a negative regulator in the IFN-gamma-mediated JAK-STAT signaling cascade by inhibiting smooth muscle cell (VSMCs) proliferation and intimal expansion, and thus, prevents graft arteriosclerosis (GA). Acts as a GTPase-activating protein (GAP) for the ADP ribosylation factor 6 (ARF6) and Ras. Promotes hydrolysis of the ARF6-bound GTP and thus, negatively regulates phosphatidylinositol 4,5-bisphosphate (PIP2)-dependent TLR4-TIRAP-MyD88 and NF-kappa-B signaling pathways in endothelial cells in response to lipopolysaccharides (LPS). Binds specifically to phosphatidylinositol 4-phosphate (PtdIns4P) and phosphatidylinositol 3-phosphate (PtdIns3P). In response to vascular endothelial growth factor (VEGFA), acts as a negative regulator of the VEGFR2-PI3K-mediated angiogenic signaling pathway by inhibiting endothelial cell migration and tube formation. In the developing brain, promotes both the transition from the multipolar to the bipolar stage and the radial migration of cortical neurons from the ventricular zone toward the superficial layer of the neocortex in a glial-dependent locomotion process. Probable downstream effector of the Reelin signaling pathway; promotes Purkinje cell (PC) dendrites development and formation of cerebellar synapses. Also functions as a tumor suppressor protein in prostate cancer progression; prevents cell proliferation and epithelial-to-mesenchymal transition (EMT) through activation of the glycogen synthase kinase-3 beta (GSK3B)-induced beta-catenin and inhibition of PI3K-AKT and Ras-MAPK survival downstream signaling cascades, respectively. In Mus musculus (Mouse), this protein is Disabled homolog 2-interacting protein (Dab2ip).